We begin with the raw amino-acid sequence, 408 residues long: 26S proteasome regulatory subunit 6B homolog (408 aa).

N-acetylalanine is present on A2. At S16 the chain carries Phosphoserine. Positions 28 to 75 form a coiled coil; sequence EDLYGRLKSLERQLEFTDIQEEYVKDEQKNLKRELLRAQEEVKRIQSV. 196 to 203 serves as a coordination point for ATP; it reads GPPGTGKT.

It belongs to the AAA ATPase family. Component of the 19S regulatory particle (RP/PA700) base subcomplex of the 26S proteasome. The 26S proteasome is composed of a core protease (CP), known as the 20S proteasome, capped at one or both ends by the 19S regulatory particle (RP/PA700). The RP/PA700 complex is composed of at least 17 different subunits in two subcomplexes, the base and the lid, which form the portions proximal and distal to the 20S proteolytic core, respectively. In terms of tissue distribution, expressed in dark-grown etiolated seedlings, roots, leaves, stems and flowers.

It is found in the cytoplasm. The protein localises to the nucleus. In terms of biological role, the 26S proteasome is involved in the ATP-dependent degradation of ubiquitinated proteins. The regulatory (or ATPase) complex confers ATP dependency and substrate specificity to the 26S complex. In Arabidopsis thaliana (Mouse-ear cress), this protein is 26S proteasome regulatory subunit 6B homolog (RPT3).